The primary structure comprises 349 residues: Phosphate acetyltransferase (349 aa).

The protein belongs to the phosphate acetyltransferase and butyryltransferase family.

It localises to the cytoplasm. The catalysed reaction is acetyl-CoA + phosphate = acetyl phosphate + CoA. The protein operates within metabolic intermediate biosynthesis; acetyl-CoA biosynthesis; acetyl-CoA from acetate: step 2/2. In Rickettsia typhi (strain ATCC VR-144 / Wilmington), this protein is Phosphate acetyltransferase (pta).